A 148-amino-acid chain; its full sequence is MFDVTLLILLGLAALGFISHNTTVAVSILVLIIVRVTPLSTFFPWIEKQGLSIGIIILTIGVMAPIASGTLPPSTLIHSFLNWKSLVAIAVGVIVYWLGGRGVTLMGSQLQLVAGLLVGTVLGVALFRGVPVGPLIAAGLVSLIVGKQ.

A run of 4 helical transmembrane segments spans residues 14 to 34 (ALGF…LIIV), 51 to 71 (LSIG…SGTL), 86 to 106 (LVAI…VTLM), and 121 to 141 (VLGV…AGLV).

Belongs to the UPF0756 family.

It is found in the cell membrane. This is UPF0756 membrane protein YeaL from Shigella dysenteriae serotype 1 (strain Sd197).